We begin with the raw amino-acid sequence, 353 residues long: Photosystem II protein D1 (353 aa).

T2 bears the N-acetylthreonine mark. A Phosphothreonine modification is found at T2. 3 consecutive transmembrane segments (helical) span residues 29 to 46, 118 to 133, and 142 to 156; these read YIGW…TATS, HFLL…EWEL, and WIAV…AATA. Residue H118 coordinates chlorophyll a. Y126 provides a ligand contact to pheophytin a. Residues D170 and E189 each contribute to the [CaMn4O5] cluster site. A helical membrane pass occupies residues 197 to 218; it reads FHMLGVAGVFGGSLFSAMHGSL. H198 provides a ligand contact to chlorophyll a. Residues H215 and 264 to 265 contribute to the a quinone site; that span reads SF. Position 215 (H215) interacts with Fe cation. H272 contributes to the Fe cation binding site. The helical transmembrane segment at 274 to 288 threads the bilayer; the sequence is FLAAWPVVGIWFTAL. [CaMn4O5] cluster-binding residues include H332, E333, D342, and A344. A propeptide spanning residues 345–353 is cleaved from the precursor; that stretch reads ALEVPYLNG.

Belongs to the reaction center PufL/M/PsbA/D family. PSII is composed of 1 copy each of membrane proteins PsbA, PsbB, PsbC, PsbD, PsbE, PsbF, PsbH, PsbI, PsbJ, PsbK, PsbL, PsbM, PsbT, PsbX, PsbY, PsbZ, Psb30/Ycf12, at least 3 peripheral proteins of the oxygen-evolving complex and a large number of cofactors. It forms dimeric complexes. The cofactor is The D1/D2 heterodimer binds P680, chlorophylls that are the primary electron donor of PSII, and subsequent electron acceptors. It shares a non-heme iron and each subunit binds pheophytin, quinone, additional chlorophylls, carotenoids and lipids. D1 provides most of the ligands for the Mn4-Ca-O5 cluster of the oxygen-evolving complex (OEC). There is also a Cl(-1) ion associated with D1 and D2, which is required for oxygen evolution. The PSII complex binds additional chlorophylls, carotenoids and specific lipids.. In terms of processing, phosphorylated in both bundle sheath and mesophyll cells, phosphorylation increases when cells are grown under high rather than low light regimes (70 vs 900 umol photons/m-2/s). PSII is subject to light-induced damage, in particular to D1. Damaged protein is degraded by Deg1 and FtsH proteases and replaced. In maize mesophyll cells D1 degradation is less extensive in grana (stacked) vs stroma (unstacked) lamellae, in part due to exclusion of FtsH from the grana. D1 degradation is faster in bundle sheath cells. Post-translationally, tyr-161 forms a radical intermediate that is referred to as redox-active TyrZ, YZ or Y-Z. In terms of processing, C-terminally processed by CTPA; processing is essential to allow assembly of the oxygen-evolving complex and thus photosynthetic growth.

The protein resides in the plastid. The protein localises to the chloroplast thylakoid membrane. It carries out the reaction 2 a plastoquinone + 4 hnu + 2 H2O = 2 a plastoquinol + O2. Photosystem II (PSII) is a light-driven water:plastoquinone oxidoreductase that uses light energy to abstract electrons from H(2)O, generating O(2) and a proton gradient subsequently used for ATP formation. It consists of a core antenna complex that captures photons, and an electron transfer chain that converts photonic excitation into a charge separation. The D1/D2 (PsbA/PsbD) reaction center heterodimer binds P680, the primary electron donor of PSII as well as several subsequent electron acceptors. The sequence is that of Photosystem II protein D1 from Zea mays (Maize).